Consider the following 1096-residue polypeptide: Carbamoyl phosphate synthase large chain (1096 aa).

Residues 1–402 are carboxyphosphate synthetic domain; sequence MPKRDDINSV…ALQKALRSLE (402 aa). The ATP site is built by Arg129, Arg169, Gly175, Gly176, Glu208, Ile210, Glu215, Gly241, Val242, His243, Gln285, and Glu299. The 196-residue stretch at 133-328 folds into the ATP-grasp 1 domain; sequence KDLVIESGAD…IAKIAAKLAI (196 aa). Residues Gln285, Glu299, and Asn301 each contribute to the Mg(2+) site. The Mn(2+) site is built by Gln285, Glu299, and Asn301. Positions 403–547 are oligomerization domain; sequence KRGSSFHWGP…YSSYDSETEI (145 aa). The interval 548–950 is carbamoyl phosphate synthetic domain; sequence VPSDRRKVII…AFAKSQEAAF (403 aa). The ATP-grasp 2 domain maps to 676–870; sequence SGILDTAGLV…LAKAASLVMV (195 aa). ATP contacts are provided by Arg712, Arg754, Leu756, Glu761, Gly786, Ile787, His788, Ser789, Gln829, and Glu841. Residues Gln829, Glu841, and Asn843 each coordinate Mg(2+). Residues Gln829, Glu841, and Asn843 each coordinate Mn(2+). The 145-residue stretch at 951–1095 folds into the MGS-like domain; sequence GGLPLSGTVF…QDYAIAREAR (145 aa). The tract at residues 951–1096 is allosteric domain; sequence GGLPLSGTVF…DYAIAREARR (146 aa).

The protein belongs to the CarB family. As to quaternary structure, composed of two chains; the small (or glutamine) chain promotes the hydrolysis of glutamine to ammonia, which is used by the large (or ammonia) chain to synthesize carbamoyl phosphate. Tetramer of heterodimers (alpha,beta)4. Mg(2+) is required as a cofactor. The cofactor is Mn(2+).

It catalyses the reaction hydrogencarbonate + L-glutamine + 2 ATP + H2O = carbamoyl phosphate + L-glutamate + 2 ADP + phosphate + 2 H(+). The catalysed reaction is hydrogencarbonate + NH4(+) + 2 ATP = carbamoyl phosphate + 2 ADP + phosphate + 2 H(+). Its pathway is amino-acid biosynthesis; L-arginine biosynthesis; carbamoyl phosphate from bicarbonate: step 1/1. The protein operates within pyrimidine metabolism; UMP biosynthesis via de novo pathway; (S)-dihydroorotate from bicarbonate: step 1/3. Its function is as follows. Large subunit of the glutamine-dependent carbamoyl phosphate synthetase (CPSase). CPSase catalyzes the formation of carbamoyl phosphate from the ammonia moiety of glutamine, carbonate, and phosphate donated by ATP, constituting the first step of 2 biosynthetic pathways, one leading to arginine and/or urea and the other to pyrimidine nucleotides. The large subunit (synthetase) binds the substrates ammonia (free or transferred from glutamine from the small subunit), hydrogencarbonate and ATP and carries out an ATP-coupled ligase reaction, activating hydrogencarbonate by forming carboxy phosphate which reacts with ammonia to form carbamoyl phosphate. In Clavibacter michiganensis subsp. michiganensis (strain NCPPB 382), this protein is Carbamoyl phosphate synthase large chain.